Consider the following 181-residue polypeptide: Large ribosomal subunit protein uL10 (181 aa).

Belongs to the universal ribosomal protein uL10 family. As to quaternary structure, part of the ribosomal stalk of the 50S ribosomal subunit. The N-terminus interacts with L11 and the large rRNA to form the base of the stalk. The C-terminus forms an elongated spine to which L12 dimers bind in a sequential fashion forming a multimeric L10(L12)X complex.

Functionally, forms part of the ribosomal stalk, playing a central role in the interaction of the ribosome with GTP-bound translation factors. The protein is Large ribosomal subunit protein uL10 of Amoebophilus asiaticus (strain 5a2).